The following is a 470-amino-acid chain: MLNHVVTRFAPSPTGHLHLGGARTALFNWLYAKHNNGKFLLRIEDTDSKRSSKELIDSIINSMIWLNIQHDGEIILQSSRISRHIEIANQLILNDKAYYCYCSEEEINLEKEQYTKKGLHYKHNCIWKNRKPPTGNCSKVIRLHSDTEGITEFKDKVYGTIAVNNVQLDDMVLLRSNNTPTYLLSVVVDDYDMGITHIIRGTDHLTNTARQLLIYNALGWKPPEFAHIPLIHDENGNKLSKRHHALGIHEYKNAGILPEALVNYLLRMGWSHGNDELITIDEAIRWFSIDKVGQSPAGLDSKKLEFLNNHYINTTNNATIIEMIIPIIEKTIGYKVNTEKIGYLLNGINELKKRTKNLVNLANESLFYVEDIPISFDQESLIIIKSNHDILSILYDNLSKVLNDDWNNSTLTSMIKNIVKDYNTKIHNIYHCLRASIIGRINAPSIIDIMVNFQREECLNRIKYARDMVK.

Positions 11–21 (PSPTGHLHLGG) match the 'HIGH' region motif. The short motif at 238–242 (KLSKR) is the 'KMSKS' region element. ATP is bound at residue lysine 241.

This sequence belongs to the class-I aminoacyl-tRNA synthetase family. Glutamate--tRNA ligase type 1 subfamily. As to quaternary structure, monomer.

The protein localises to the cytoplasm. The enzyme catalyses tRNA(Glu) + L-glutamate + ATP = L-glutamyl-tRNA(Glu) + AMP + diphosphate. In terms of biological role, catalyzes the attachment of glutamate to tRNA(Glu) in a two-step reaction: glutamate is first activated by ATP to form Glu-AMP and then transferred to the acceptor end of tRNA(Glu). This chain is Glutamate--tRNA ligase 2, found in Ehrlichia ruminantium (strain Gardel).